The primary structure comprises 605 residues: MYGNWGRFIRVNLSTGDIKVEEYDEELAKKWLGSRGLAIYLLLKEMDPTVDPLSPENKLIIAAGPLTGTSAPTGGRYNVVTKSPLTGFITMANSGGYFGAELKFAGYDAIVVEGKAEKPVYIYIKDEHIEIRDASHIWGKKVSETEATIRKEVGSEKVKIASIGPAGENLVKFAAIMNDGHRAAGRGGVGAVMGSKNLKAIAVEGSKTVPIADKQKFMLVVREKVNKLRNDPVAGGGLPKYGTAVLVNIINENGLYPVKNFQTGVYPYAYEQSGEAMAAKYLVRNKPCYACPIGCGRVNRLPTVGETEGPEYESVWALGANLGINDLASIIEANHMCDELGLDTISTGGTLATAMELYEKGHIKDEELGDAPPFRWGNTEVLHYYIEKIAKREGFGDKLAEGSYRLAESYGHPELSMTVKKLELPAYDPRGAEGHGLGYATNNRGGCHIKNYMISPEILGYPYKMDPHDVSDDKIKMLILFQDLTALIDSAGLCLFTTFGLGADDYRDLLNAALGWDFTTEDYLKIGERIWNAERLFNLKAGLDPARDDTLPKRFLEEPMPEGPNKGHTVRLKEMLPRYYKLRGWTEDGKIPKEKLEELGIAEFY.

Tungstopterin contacts are provided by arginine 76, asparagine 93, glycine 95, arginine 182, alanine 183, glycine 185, and arginine 186. Positions 288, 291, and 295 each coordinate [4Fe-4S] cluster. 7 residues coordinate tungstopterin: aspartate 338, leucine 342, aspartate 343, arginine 444, lysine 450, aspartate 489, and leucine 493. Cysteine 494 provides a ligand contact to [4Fe-4S] cluster. Tungstopterin is bound at residue leucine 495.

It belongs to the AOR/FOR family. Monomer. Homodimer. [4Fe-4S] cluster is required as a cofactor. The cofactor is tungstopterin.

It catalyses the reaction an aldehyde + 2 oxidized [2Fe-2S]-[ferredoxin] + H2O = a carboxylate + 2 reduced [2Fe-2S]-[ferredoxin] + 3 H(+). With respect to regulation, inhibited by arsenite, iodoacetate and cyanide. Aldehyde ferredoxin oxidoreductase with a broad substrate specificity. Catalyzes the oxidation of a range of aliphatic aldehydes to their corresponding carboxylic acids. In vitro can use crotonaldehyde, acetaldehyde, formaldehyde, butyraldehyde or glyceraldehyde as substrate, using methyl viologen or ferredoxin, but not NAD(P), as the electron acceptor. Does not oxidize glucose or glyceraldehyde 3-phosphate. May be involved in a pyroglycolytic pathway. This Pyrococcus furiosus (strain ATCC 43587 / DSM 3638 / JCM 8422 / Vc1) protein is Tungsten-containing aldehyde ferredoxin oxidoreductase.